An 81-amino-acid chain; its full sequence is uncharacterized protein (81 aa).

As to expression, expressed in fetal brain.

This is an uncharacterized protein from Homo sapiens (Human).